The sequence spans 234 residues: Filarial antigen Av33 (234 aa).

Positions M1–G17 are cleaved as a signal peptide. The cysteines at positions 135 and 230 are disulfide-linked. Residues T204–Y234 form a disordered region. The segment covering T211–P220 has biased composition (low complexity).

Belongs to the protease inhibitor I33 family.

Its subcellular location is the secreted. Its function is as follows. Aspartyl protease inhibitor. This Acanthocheilonema viteae (Filarial nematode worm) protein is Filarial antigen Av33.